A 382-amino-acid chain; its full sequence is UDP-4-amino-4-deoxy-L-arabinose--oxoglutarate aminotransferase (382 aa).

Lys-183 carries the N6-(pyridoxal phosphate)lysine modification.

It belongs to the DegT/DnrJ/EryC1 family. ArnB subfamily. In terms of assembly, homodimer. It depends on pyridoxal 5'-phosphate as a cofactor.

The enzyme catalyses UDP-4-amino-4-deoxy-beta-L-arabinose + 2-oxoglutarate = UDP-beta-L-threo-pentopyranos-4-ulose + L-glutamate. It functions in the pathway nucleotide-sugar biosynthesis; UDP-4-deoxy-4-formamido-beta-L-arabinose biosynthesis; UDP-4-deoxy-4-formamido-beta-L-arabinose from UDP-alpha-D-glucuronate: step 2/3. Its pathway is bacterial outer membrane biogenesis; lipopolysaccharide biosynthesis. Its function is as follows. Catalyzes the conversion of UDP-4-keto-arabinose (UDP-Ara4O) to UDP-4-amino-4-deoxy-L-arabinose (UDP-L-Ara4N). The modified arabinose is attached to lipid A and is required for resistance to polymyxin and cationic antimicrobial peptides. The sequence is that of UDP-4-amino-4-deoxy-L-arabinose--oxoglutarate aminotransferase from Pseudomonas aeruginosa (strain UCBPP-PA14).